Here is a 607-residue protein sequence, read N- to C-terminus: Frizzled and smoothened-like protein J (607 aa).

The signal sequence occupies residues 1–26; it reads MVSNKNLLPIIYIFFIILYFGDVAKS. The Extracellular segment spans residues 27 to 247; the sequence is QYFPLDKGAT…QWRNIYRLSD (221 aa). Residues 32-182 form the FZ domain; the sequence is DKGATCQKYR…LSYTNTCENT (151 aa). 3 cysteine pairs are disulfide-bonded: cysteine 37-cysteine 108, cysteine 50-cysteine 101, and cysteine 127-cysteine 179. Residues asparagine 63, asparagine 133, asparagine 155, asparagine 164, asparagine 190, and asparagine 222 are each glycosylated (N-linked (GlcNAc...) asparagine). The helical transmembrane segment at 248 to 268 threads the bilayer; sequence VLSILSCILTLFLVITLGIIN. Residues 269 to 276 lie on the Cytoplasmic side of the membrane; the sequence is PKVSRFDK. Residues 277-297 form a helical membrane-spanning segment; it reads INVMLLSSIFLQAFSGALMTF. A glycan (N-linked (GlcNAc...) asparagine) is linked at asparagine 298. The Extracellular portion of the chain corresponds to 298–330; that stretch reads NGTENTLCPEDGRFASYIDRMCVATGFLLHGSS. Residues 331 to 351 traverse the membrane as a helical segment; that stretch reads LLVVQWWCVLSFEVWFTIFQV. Residues 352 to 358 lie on the Cytoplasmic side of the membrane; it reads GKKQKDR. The helical transmembrane segment at 359 to 379 threads the bilayer; the sequence is FIYYLVASLIIAWIPPIVSIS. The Extracellular portion of the chain corresponds to 380–401; the sequence is KNEYSGGPANPFCWLTTFNYRR. Residues 402–422 traverse the membrane as a helical segment; it reads FAFWLPMGIFLCLGGVFLILL. Residues 423–451 lie on the Cytoplasmic side of the membrane; the sequence is MREIYVIVSGNVQSTKESRFKVLKMEAKP. The helical transmembrane segment at 452–472 threads the bilayer; it reads IISLIMYFSCLLYLFIYDQWI. The Extracellular portion of the chain corresponds to 473–508; it reads NNHMHVYTDSIPSYALCLLTSTSTNDCLLKAPDITG. A helical transmembrane segment spans residues 509–529; the sequence is LGYFIYSIRVFGVYAFIIYGI. Over 530–607 the chain is Cytoplasmic; the sequence is SKKTLQIWKY…VELDSNSDAL (78 aa). The Lys-Thr-X-X-X-Trp motif, mediates interaction with the PDZ domain of Dvl family members motif lies at 532 to 537; sequence KTLQIW. Residues 559 to 575 are compositionally biased toward low complexity; the sequence is TAKSSNSNNSSTTNNIS. Residues 559–607 are disordered; the sequence is TAKSSNSNNSSTTNNISVKASSNMEYETRQENENGDSQSVELDSNSDAL. Positions 593–607 are enriched in polar residues; the sequence is GDSQSVELDSNSDAL.

Belongs to the G-protein coupled receptor Fz/Smo family.

The protein localises to the membrane. This is Frizzled and smoothened-like protein J (fslJ-1) from Dictyostelium discoideum (Social amoeba).